Here is a 144-residue protein sequence, read N- to C-terminus: Large ribosomal subunit protein uL13 (144 aa).

The protein belongs to the universal ribosomal protein uL13 family. In terms of assembly, part of the 50S ribosomal subunit.

This protein is one of the early assembly proteins of the 50S ribosomal subunit, although it is not seen to bind rRNA by itself. It is important during the early stages of 50S assembly. This Legionella pneumophila (strain Paris) protein is Large ribosomal subunit protein uL13.